The following is a 308-amino-acid chain: tRNA pseudouridine synthase B (308 aa).

The active-site Nucleophile is Asp-47.

It belongs to the pseudouridine synthase TruB family. Type 1 subfamily.

The enzyme catalyses uridine(55) in tRNA = pseudouridine(55) in tRNA. Responsible for synthesis of pseudouridine from uracil-55 in the psi GC loop of transfer RNAs. The polypeptide is tRNA pseudouridine synthase B (Xanthomonas campestris pv. campestris (strain 8004)).